The chain runs to 367 residues: Phosphoribosylaminoimidazole-succinocarboxamide synthase (367 aa).

This sequence belongs to the SAICAR synthetase family.

It carries out the reaction 5-amino-1-(5-phospho-D-ribosyl)imidazole-4-carboxylate + L-aspartate + ATP = (2S)-2-[5-amino-1-(5-phospho-beta-D-ribosyl)imidazole-4-carboxamido]succinate + ADP + phosphate + 2 H(+). Its pathway is purine metabolism; IMP biosynthesis via de novo pathway; 5-amino-1-(5-phospho-D-ribosyl)imidazole-4-carboxamide from 5-amino-1-(5-phospho-D-ribosyl)imidazole-4-carboxylate: step 1/2. The sequence is that of Phosphoribosylaminoimidazole-succinocarboxamide synthase from Shewanella frigidimarina (strain NCIMB 400).